Consider the following 213-residue polypeptide: Adenylate kinase (213 aa).

10 to 15 (GSGKGS) contributes to the ATP binding site. Positions 30 to 60 (STGNLFRAILKEDSELARKIKEINVSGGKLV) are NMP. AMP-binding positions include Thr-31, Arg-36, 58–60 (KLV), 87–90 (GYPR), and Gln-94. The interval 123–160 (GRWMCPKCAGIYNIHFKKPQVHGLCDNDQATLYQRADD) is LID. Arg-124 provides a ligand contact to ATP. Zn(2+) is bound by residues Cys-127 and Cys-130. Residue 133-134 (IY) coordinates ATP. Positions 147 and 150 each coordinate Zn(2+). Arg-157 and Arg-168 together coordinate AMP. Gln-196 contacts ATP.

The protein belongs to the adenylate kinase family. In terms of assembly, monomer.

Its subcellular location is the cytoplasm. The catalysed reaction is AMP + ATP = 2 ADP. It participates in purine metabolism; AMP biosynthesis via salvage pathway; AMP from ADP: step 1/1. Its function is as follows. Catalyzes the reversible transfer of the terminal phosphate group between ATP and AMP. Plays an important role in cellular energy homeostasis and in adenine nucleotide metabolism. This Ureaplasma parvum serovar 3 (strain ATCC 27815 / 27 / NCTC 11736) protein is Adenylate kinase.